We begin with the raw amino-acid sequence, 244 residues long: MMNLLSNDGVQVLPRPFTLNERRREVRSFVLRQGHFTPAQKRAFDHYWPRFGVDFIGQLRDLDVLFGRSAPKVLEVGFGNGAALRFAAQHEPRYDYIGIEVYAPGVGRLLNGLAEDGSRHVRLYHYDAVEVLNKEIVDGALDEIRIYFPDPWHKKRHHKRRLIQPLFATLLVRKLRVGGCLHMATDWADYAEQMWDVLDATPGLVNRAGLRGQVPCPDWRVQTRFERRGQNLGHRVWDLLYDRV.

S-adenosyl-L-methionine-binding residues include Glu-75, Glu-100, Asp-127, and Asp-150. The active site involves Asp-150. Substrate is bound by residues Lys-154, Asp-186, and 223 to 226 (TRFE).

This sequence belongs to the class I-like SAM-binding methyltransferase superfamily. TrmB family.

The catalysed reaction is guanosine(46) in tRNA + S-adenosyl-L-methionine = N(7)-methylguanosine(46) in tRNA + S-adenosyl-L-homocysteine. It functions in the pathway tRNA modification; N(7)-methylguanine-tRNA biosynthesis. Catalyzes the formation of N(7)-methylguanine at position 46 (m7G46) in tRNA. This chain is tRNA (guanine-N(7)-)-methyltransferase, found in Xylella fastidiosa (strain 9a5c).